We begin with the raw amino-acid sequence, 154 residues long: 6,7-dimethyl-8-ribityllumazine synthase (154 aa).

5-amino-6-(D-ribitylamino)uracil is bound by residues Phe-22, 56–58, and 80–82; these read AFE and AVI. 85 to 86 is a (2S)-2-hydroxy-3-oxobutyl phosphate binding site; sequence AT. The active-site Proton donor is His-88. A 5-amino-6-(D-ribitylamino)uracil-binding site is contributed by Phe-113. Arg-127 lines the (2S)-2-hydroxy-3-oxobutyl phosphate pocket.

This sequence belongs to the DMRL synthase family.

It carries out the reaction (2S)-2-hydroxy-3-oxobutyl phosphate + 5-amino-6-(D-ribitylamino)uracil = 6,7-dimethyl-8-(1-D-ribityl)lumazine + phosphate + 2 H2O + H(+). It functions in the pathway cofactor biosynthesis; riboflavin biosynthesis; riboflavin from 2-hydroxy-3-oxobutyl phosphate and 5-amino-6-(D-ribitylamino)uracil: step 1/2. Functionally, catalyzes the formation of 6,7-dimethyl-8-ribityllumazine by condensation of 5-amino-6-(D-ribitylamino)uracil with 3,4-dihydroxy-2-butanone 4-phosphate. This is the penultimate step in the biosynthesis of riboflavin. The protein is 6,7-dimethyl-8-ribityllumazine synthase of Clostridium botulinum (strain ATCC 19397 / Type A).